The sequence spans 352 residues: Glucose-6-phosphatase catalytic subunit 1 (352 aa).

The Lumenal segment spans residues 1–27 (MDLLHSWGVELAVYLQTRYGKYEGLFD). A helical transmembrane segment spans residues 28–48 (LASTVADLHTTFFWLFPIWFH). Residues 49–56 (LRRDTALR) are Cytoplasmic-facing. Residues 57–77 (LIWVAVIGDWLNLVLKWVLFG) form a helical membrane-spanning segment. Over 78-113 (ERPYWWVHETKFYGAGPAPSLQQFPITCETGPGSPS) the chain is Lumenal. Arg79 lines the substrate pocket. Residues 114–134 (GHAMGAAGVWYVMVTALLSIA) traverse the membrane as a helical segment. The active-site Proton donor is the His115. Residues 135-141 (REKQCPP) are Cytoplasmic-facing. The helical transmembrane segment at 142-162 (LLYRFLYIGLWMLMGLVELVV) threads the bilayer. Topologically, residues 163-166 (CISR) are lumenal. Arg166 is a binding site for substrate. A helical membrane pass occupies residues 167-187 (VYMAAHFPHQVIAGIITGTLV). The active-site Nucleophile is His172. Residues 188–205 (AEVVSKEKWIYSASLKKY) are Cytoplasmic-facing. The helical transmembrane segment at 206-226 (FLITLFLTSFAVGFYVLLKAL) threads the bilayer. Residues 227 to 256 (DVDLLWTMEKAQKWCIRPEWVHLDSAPFAS) are Lumenal-facing. Residues 257–276 (LLRNMGSLFGLGLGLHSPFY) form a helical membrane-spanning segment. Topologically, residues 277-289 (KTTKMRIMSAPLR) are cytoplasmic. The chain crosses the membrane as a helical span at residues 290–310 (IGCIVISVSLLHLLDGWTFSP). At 311-324 (ENHMTFYALSFGKS) the chain is on the lumenal side. A helical membrane pass occupies residues 325-345 (AVALLIPTTLVPWALSKIYPV). Over 346–352 (KTEGKNL) the chain is Cytoplasmic. The Prevents secretion from ER motif lies at 349 to 352 (GKNL).

This sequence belongs to the glucose-6-phosphatase family.

It localises to the endoplasmic reticulum membrane. It catalyses the reaction D-glucose 6-phosphate + H2O = D-glucose + phosphate. It functions in the pathway carbohydrate biosynthesis; gluconeogenesis. In terms of biological role, hydrolyzes glucose-6-phosphate to glucose in the endoplasmic reticulum. Forms with the glucose-6-phosphate transporter (SLC37A4/G6PT) the complex responsible for glucose production in the terminal step of glycogenolysis and gluconeogenesis. Hence, it is the key enzyme in homeostatic regulation of blood glucose levels. The sequence is that of Glucose-6-phosphatase catalytic subunit 1 (g6pc1) from Haplochromis nubilus (Blue Victoria mouthbrooder).